A 414-amino-acid chain; its full sequence is Serine/threonine transporter SstT (414 aa).

Over 2 to 15 the chain is Cytoplasmic; sequence TTQHSPGLFRRLAH. Residues 16–36 form a helical membrane-spanning segment; sequence GSLVKQILAGLILGILLAWIS. The Periplasmic segment spans residues 37-45; the sequence is KPAAEAVGL. A helical membrane pass occupies residues 46-66; the sequence is LGTLFVGALKAVAPILVLMLV. Residues 67 to 83 are Cytoplasmic-facing; sequence MASIANHQHGQKTNIRP. Residues 84 to 104 traverse the membrane as a helical segment; the sequence is ILFLYLLGTFSAALAAVIFSF. Topologically, residues 105-142 are periplasmic; that stretch reads AFPSTLHLSSSAGDISPPSGIVEVMRGLVMSMVSNPID. A helical membrane pass occupies residues 143–163; the sequence is ALLKGNYIGILVWAIGLGFAL. Residues 164–179 are Cytoplasmic-facing; it reads RHGNETTKNLVNDMSN. A helical transmembrane segment spans residues 180–200; that stretch reads AVTFMVKLVIHFAPIGIFGLV. The Periplasmic portion of the chain corresponds to 201–217; the sequence is SSTLATTGFSTLWGYAQ. The helical transmembrane segment at 218-238 threads the bilayer; it reads LLVVLVGCMLLVALVVNPLLV. Topologically, residues 239–299 are cytoplasmic; the sequence is WWKIRRNPFP…VSIPLGATIN (61 aa). The helical transmembrane segment at 300-320 threads the bilayer; it reads MAGAAITITVLTLAAVNTLGI. Residues 321–331 are Periplasmic-facing; it reads PVDLPTALLLS. A helical transmembrane segment spans residues 332–352; that stretch reads VVASLCACGASGVAGGSLLLI. The Cytoplasmic segment spans residues 353–414; the sequence is PLACNMFGIS…DRLANSALRN (62 aa).

It belongs to the dicarboxylate/amino acid:cation symporter (DAACS) (TC 2.A.23) family.

The protein localises to the cell inner membrane. The catalysed reaction is L-serine(in) + Na(+)(in) = L-serine(out) + Na(+)(out). The enzyme catalyses L-threonine(in) + Na(+)(in) = L-threonine(out) + Na(+)(out). Its function is as follows. Involved in the import of serine and threonine into the cell, with the concomitant import of sodium (symport system). The sequence is that of Serine/threonine transporter SstT from Escherichia coli (strain UTI89 / UPEC).